Reading from the N-terminus, the 916-residue chain is Calcium homeostasis endoplasmic reticulum protein (916 aa).

Met-1 is modified (N-acetylmethionine). An SURP motif repeat occupies 15 to 57 (VIDKLAQFVARNGPEFEKMTMEKQKDNPKFSFLFGGEFYSYYK). Lys-18 is subject to N6-acetyllysine. Residues 149 to 289 (ETQLDMNEFD…QLQSPALGLG (141 aa)) form the CID domain. Disordered stretches follow at residues 336-549 (QQQQ…RFPP) and 601-635 (HPPW…PHIN). Pro residues predominate over residues 354 to 374 (TPPPPAPPPAPAPAPAIPPTT). Positions 480–501 (WNNQPDAAWNSQFEGPWNSQHE) are enriched in polar residues. Pro residues predominate over residues 525 to 541 (PFPPHQQHPQFNQPPHP). At Tyr-714 the chain carries Phosphotyrosine. Residues 722–878 (RARRRKGQEK…DPIKGGDVRD (157 aa)) are disordered. Residues 739–749 (SRSRSKSRGRS) show a composition bias toward basic residues. Low complexity predominate over residues 750–766 (SSRSNSRSSKSSGSYSR). The segment covering 767–815 (SRSRSCSRSYSRSRSRSRSRSRSSRSRSRSQSRSRSKSYSPGRRRRSRS) has biased composition (basic residues). A phosphoserine mark is found at Ser-813, Ser-815, and Ser-817. Thr-819 carries the phosphothreonine modification. Position 828 is a phosphoserine (Ser-828). Residues 841 to 891 (EENKGHQMLVKMGWSGSGGLGAKEQGIQDPIKGGDVRDKWDQYKGVGVALD) enclose the G-patch domain. Lys-844 is covalently cross-linked (Glycyl lysine isopeptide (Lys-Gly) (interchain with G-Cter in SUMO2)). Ser-855 and Ser-857 each carry phosphoserine. A Glycyl lysine isopeptide (Lys-Gly) (interchain with G-Cter in SUMO2) cross-link involves residue Lys-872. Lys-879 carries the post-translational modification N6-acetyllysine. Ser-904 bears the Phosphoserine mark.

In terms of tissue distribution, expressed in brain, placenta, lung, liver, kidney, pancreas, cardiac and skeletal muscle, and in cultured HEL and Dami cells.

Its subcellular location is the cytoplasm. The protein resides in the perinuclear region. The protein localises to the endoplasmic reticulum. Its function is as follows. Involved in calcium homeostasis, growth and proliferation. This Homo sapiens (Human) protein is Calcium homeostasis endoplasmic reticulum protein.